The sequence spans 163 residues: Large ribosomal subunit protein uL10 (163 aa).

Belongs to the universal ribosomal protein uL10 family. Part of the ribosomal stalk of the 50S ribosomal subunit. The N-terminus interacts with L11 and the large rRNA to form the base of the stalk. The C-terminus forms an elongated spine to which L12 dimers bind in a sequential fashion forming a multimeric L10(L12)X complex.

Functionally, forms part of the ribosomal stalk, playing a central role in the interaction of the ribosome with GTP-bound translation factors. This chain is Large ribosomal subunit protein uL10, found in Haemophilus influenzae (strain PittEE).